The primary structure comprises 101 residues: uncharacterized protein (101 aa).

This is an uncharacterized protein from Mycobacterium bovis (strain ATCC BAA-935 / AF2122/97).